The primary structure comprises 1414 residues: Phenyloxazoline synthase MbtB (1414 aa).

The region spanning 5–78 is the Carrier 1 domain; it reads TACSEIIRAE…AWSQLVSAGT (74 aa). At Ser-39 the chain carries O-(pantetheine 4'-phosphoryl)serine. Residues 96–394 are condensation/cyclization; the sequence is EGEPFPLAPM…SSLLLDVDLT (299 aa). An adenylation region spans residues 579 to 975; it reads SYAQLRDQAS…RLPGVHAAAA (397 aa). Residues 1057–1135 enclose the Carrier 2 domain; that stretch reads APRTVLQRAL…ALAQLLTGRE (79 aa). O-(pantetheine 4'-phosphoryl)serine is present on Ser-1094. Positions 1188-1413 are thioesterase; sequence GAVLVFPHAG…AVARMVSADV (226 aa).

The protein belongs to the ATP-dependent AMP-binding enzyme family. MbtB subfamily. Requires pantetheine 4'-phosphate as cofactor. 4'-phosphopantetheine is transferred from CoA to a specific serine in each of the two carrier protein domains, leading to their activation from apo to holo forms.

Its pathway is siderophore biosynthesis; mycobactin biosynthesis. Functionally, involved in the initial steps of the mycobactin biosynthetic pathway. Putatively couples activated salicylic acid with serine or threonine and cyclizes this precursor to the hydroxyphenyloxazoline ring system present in this class of siderophores. This Mycobacterium bovis (strain ATCC BAA-935 / AF2122/97) protein is Phenyloxazoline synthase MbtB (mbtB).